Reading from the N-terminus, the 424-residue chain is S-phase kinase-associated protein 2 (424 aa).

Residues 52-73 form a disordered region; it reads PHGLLSNLGHPQSPPRKRVKGK. Ser64 is subject to Phosphoserine. A Nuclear localization signal motif is present at residues 67–73; sequence RKRVKGK. N6-acetyllysine; by p300/EP300 is present on residues Lys68 and Lys71. Ser75 is modified (phosphoserine). An F-box domain is found at 94-140; it reads GVSWDSLPDELLLGIFSCLCLPELLRVSGVCKRWYRLSLDESLWQSL. 10 LRR repeats span residues 151-176, 177-204, 210-234, 235-257, 258-284, 286-308, 309-330, 334-356, 359-378, and 380-401; these read VTVR…PLGE, SFSS…ILSE, NLSL…NLVR, LNLC…SCSR, LDEL…LPNT, TQLN…IIKR, CPNL…CFPE, LNYL…LLEL, IPTL…TLQL, and REAL…RPTM. The residue at position 179 (Ser179) is a Phosphoserine.

Part of a SCF(SKP2) complex consisting of CUL1, RBX1, SKP1 and SKP2. Component of a SCF(SKP2)-like complex containing CUL1, SKP1, TRIM21 and SKP2. Interacts directly with CUL1 and SKP1. Interacts with ASB2 which is the substrate-recognition component of a probable ECS E3 ubiquitin-protein ligase complex; ASB2 is likely to bridge the formation of dimeric E3-ubiquitin-protein ligase complexes composed of an ECS complex and an SCF(SKP2) complex. Interacts with CKS1. Interacts with the cyclin-A-CDK2 complex. Interacts with ORC1, phosphorylated CDT1, phosphorylated RBL2, ELF4, phosphorylated RAG2, FOXO1, UBP43, MYC, TOB1, TAL1 and KMT2A/MLL1. Interacts with TRIM21. Interacts with cyclin-E. Interacts with CARM1. Phosphorylated on serine and threonine resudues in response to DNA damage, promoting 'Lys-63'-linked ubiquitination of NBN. Post-translationally, ubiquitinated by the APC/C complex, leading to its degradation by the proteasome. Deubiquitinated by USP13. In terms of processing, acetylation at Lys-68 and Lys-71 increases stability through impairment of APC/C-mediated proteolysis and promotes cytoplasmic retention. Deacetylated by SIRT3.

It localises to the cytoplasm. The protein resides in the nucleus. It participates in protein modification; protein ubiquitination. Functionally, substrate recognition component of a SCF (SKP1-CUL1-F-box protein) E3 ubiquitin-protein ligase complex which mediates the ubiquitination and subsequent proteasomal degradation of target proteins involved in cell cycle progression, signal transduction and transcription. Specifically recognizes phosphorylated CDKN1B/p27kip and is involved in regulation of G1/S transition. Degradation of CDKN1B/p27kip also requires CKS1. Recognizes target proteins ORC1, CDT1, RBL2, KMT2A/MLL1, CDK9, RAG2, NBN, FOXO1, UBP43, YTHDF2, and probably MYC, TOB1 and TAL1. Degradation of TAL1 also requires STUB1. Recognizes CDKN1A in association with CCNE1 or CCNE2 and CDK2. Promotes ubiquitination and destruction of CDH1 in a CK1-dependent manner, thereby regulating cell migration. Following phosphorylation in response to DNA damage, mediates 'Lys-63'-linked ubiquitination of NBN, promoting ATM recruitment to DNA damage sites and DNA repair via homologous recombination. In terms of biological role, through the ubiquitin-mediated proteasomal degradation of viral proteins may have an antiviral activity. This is S-phase kinase-associated protein 2 (Skp2) from Mus musculus (Mouse).